The following is a 245-amino-acid chain: tRNA (guanine-N(1)-)-methyltransferase (245 aa).

Residues Gly114 and 134 to 139 contribute to the S-adenosyl-L-methionine site; that span reads IGDYIL.

It belongs to the RNA methyltransferase TrmD family. Homodimer.

The protein localises to the cytoplasm. It catalyses the reaction guanosine(37) in tRNA + S-adenosyl-L-methionine = N(1)-methylguanosine(37) in tRNA + S-adenosyl-L-homocysteine + H(+). Its function is as follows. Specifically methylates guanosine-37 in various tRNAs. In Listeria welshimeri serovar 6b (strain ATCC 35897 / DSM 20650 / CCUG 15529 / CIP 8149 / NCTC 11857 / SLCC 5334 / V8), this protein is tRNA (guanine-N(1)-)-methyltransferase.